We begin with the raw amino-acid sequence, 1683 residues long: A-kinase anchor protein SPHKAP (1683 aa).

Polar residues-rich tracts occupy residues 1–14 (MDVN…SNVE) and 289–301 (AENT…NPSA). Disordered stretches follow at residues 1–30 (MDVN…ITSS), 275–320 (RMPS…ATNY), and 582–601 (LLPT…LVTE). The segment at 910-927 (FAEELAETVVSMATEIAA) is PKA-RII subunit binding domain. The tract at residues 960 to 983 (LKRKKENSGTGSTVRKHKPPRLSE) is disordered. Phosphoserine is present on residues Ser1006, Ser1066, Ser1088, Ser1101, Ser1102, Ser1105, Ser1240, and Ser1269. Disordered regions lie at residues 1359 to 1387 (VTEG…PTRE) and 1415 to 1518 (ETDQ…DTSS). Polar residues predominate over residues 1362–1371 (GNCSPVSSPS). Residues 1469–1490 (LETREELEVDVLKEDITLDESR) show a composition bias toward basic and acidic residues. A compositionally biased stretch (low complexity) spans 1492-1504 (PPSSSEESTGSWS).

It belongs to the AKAP110 family. As to quaternary structure, interacts (via the PKA-RII subunit binding domain) with the RI subunit of PKA. Interacts with SPHK1; the interaction greatly reduces SPHK1 activity. As to expression, abundant in heart ventricle (at protein level).

Its subcellular location is the cytoplasm. Anchoring protein that binds preferentially to the type I regulatory subunit of c-AMP-dependent protein kinase (PKA type I) and targets it to distinct subcellular compartments. May act as a converging factor linking cAMP and sphingosine signaling pathways. Plays a regulatory role in the modulation of SPHK1. The polypeptide is A-kinase anchor protein SPHKAP (Sphkap) (Rattus norvegicus (Rat)).